A 50-amino-acid chain; its full sequence is Ampulexin 1 (50 aa).

Positions Met-1 to Pro-26 are cleaved as a signal peptide.

Monomer. In terms of tissue distribution, expressed in venom sac and, to a lesser extent, in venom gland. Not expressed in brain.

It localises to the secreted. In terms of biological role, amphipathic peptide which probably adopts an alpha-helical structure. When injected in subesophageal ganglia of cockroach P.americana, a natural host for larvae of A.compressa, dampens the escape response for about 1 hour which may contribute to early stages of hypokinesia. Has no antimicrobial activity against E.coli DH5alpha or B.thuringiensis. Is not cytotoxic in vitro. The polypeptide is Ampulexin 1 (Ampulex compressa (Emerald cockroach wasp)).